Reading from the N-terminus, the 160-residue chain is MNPAERPDTSLCGVRLAIDWGKARIGVAASDRDAILAFPVETVHTADRPVQRLAEIVAEYEPVEVIMGLPVALNGTEQLAAQDVRDAGRQLTEAINPIPVRWVDERMTTRTAARALHEAGRNARKQRGVIDQAAAVAILEHVLEQVRLGQSETATGGADS.

The protein belongs to the YqgF nuclease family.

The protein resides in the cytoplasm. Functionally, could be a nuclease involved in processing of the 5'-end of pre-16S rRNA. The polypeptide is Putative pre-16S rRNA nuclease (Cutibacterium acnes (strain DSM 16379 / KPA171202) (Propionibacterium acnes)).